A 455-amino-acid polypeptide reads, in one-letter code: Glutamyl-tRNA reductase (455 aa).

Substrate is bound by residues 49–52 (TCNR), serine 109, 114–116 (ETQ), and glutamine 120. Cysteine 50 serves as the catalytic Nucleophile. 189 to 194 (GAGKMG) contacts NADP(+).

Belongs to the glutamyl-tRNA reductase family. Homodimer.

It carries out the reaction (S)-4-amino-5-oxopentanoate + tRNA(Glu) + NADP(+) = L-glutamyl-tRNA(Glu) + NADPH + H(+). Its pathway is porphyrin-containing compound metabolism; protoporphyrin-IX biosynthesis; 5-aminolevulinate from L-glutamyl-tRNA(Glu): step 1/2. In terms of biological role, catalyzes the NADPH-dependent reduction of glutamyl-tRNA(Glu) to glutamate 1-semialdehyde (GSA). The sequence is that of Glutamyl-tRNA reductase from Geobacillus thermodenitrificans (strain NG80-2).